Here is a 135-residue protein sequence, read N- to C-terminus: LELDEKTLTITLNDAGESVTLTSEQATEGQKLFVANCTKCHLQGKTKTNNNVSLGLGDLAKAEPPRDNLLALIDYLEHPTSYDGEDDLSELHPNVSRPDIYPELRNLTEDDVYNVAAYMLVAPRLDERWGGTIYF.

Heme c is bound by residues Cys-37, Cys-40, His-41, and His-92.

It belongs to the cytochrome c family. PsbV subfamily. As to quaternary structure, PSII is composed of 1 copy each of membrane proteins PsbA, PsbB, PsbC, PsbD, PsbE, PsbF, PsbH, PsbI, PsbJ, PsbK, PsbL, PsbM, PsbT, PsbX, PsbY, PsbZ, Psb30/Ycf12, peripheral proteins PsbO, CyanoQ (PsbQ), PsbU, PsbV and a large number of cofactors. It forms dimeric complexes. The cofactor is heme c.

It is found in the cellular thylakoid membrane. Functionally, one of the extrinsic, lumenal subunits of photosystem II (PSII). PSII is a light-driven water plastoquinone oxidoreductase, using light energy to abstract electrons from H(2)O, generating a proton gradient subsequently used for ATP formation. The extrinsic proteins stabilize the structure of photosystem II oxygen-evolving complex (OEC), the ion environment of oxygen evolution and protect the OEC against heat-induced inactivation. Low-potential cytochrome c that plays a role in the OEC of PSII. The protein is Photosystem II extrinsic protein V of Microcystis aeruginosa.